A 131-amino-acid polypeptide reads, in one-letter code: Amicyanin (131 aa).

An N-terminal signal peptide occupies residues 1–26; sequence MISATKIRSCLAACVLAAFGATGALA. In terms of domain architecture, Plastocyanin-like spans 27-131; the sequence is DKATIPSESP…PFMRGKVVVE (105 aa). H79, C118, H121, and M124 together coordinate Cu cation.

It depends on Cu cation as a cofactor.

The protein resides in the periplasm. The protein operates within one-carbon metabolism; methylamine degradation. Primary acceptor of electrons from methylamine dehydrogenase. Passes those electrons on either a soluble cytochrome c or to pseudoazurin. In Paracoccus denitrificans, this protein is Amicyanin (mauC).